We begin with the raw amino-acid sequence, 546 residues long: Chaperonin GroEL 1 (546 aa).

ATP contacts are provided by residues 30–33 (TLGP), Lys51, 87–91 (DGTTT), Gly415, 479–481 (NAA), and Asp495. Positions 526 to 546 (KEDAPMPGGMPGGMGGMGMDM) are disordered. Over residues 534-546 (GMPGGMGGMGMDM) the composition is skewed to gly residues.

The protein belongs to the chaperonin (HSP60) family. In terms of assembly, forms a cylinder of 14 subunits composed of two heptameric rings stacked back-to-back. Interacts with the co-chaperonin GroES.

It localises to the cytoplasm. It carries out the reaction ATP + H2O + a folded polypeptide = ADP + phosphate + an unfolded polypeptide.. Functionally, together with its co-chaperonin GroES, plays an essential role in assisting protein folding. The GroEL-GroES system forms a nano-cage that allows encapsulation of the non-native substrate proteins and provides a physical environment optimized to promote and accelerate protein folding. The sequence is that of Chaperonin GroEL 1 from Burkholderia ambifaria (strain ATCC BAA-244 / DSM 16087 / CCUG 44356 / LMG 19182 / AMMD) (Burkholderia cepacia (strain AMMD)).